The primary structure comprises 953 residues: MIDGAPPSDPPEPSQHEELPDRLRVHSLARTLGTTSRRVLDALTALDGRVRSAHSTVDRVDAVRVRDLLATHLETAGVLAASVHAPEASEEPESRLMLETQETRNADVERPHYMPLFVAPQPIPEPLADDEDVDDGPDYVADDSDADDEGQLDRPANRRRRRGRRGRGRGRGEQGGSDGDPVDQQSEPRAQQFTSADAAETDDGDDRDSEDTEAGDNGEDENGSLEAGNRRRRRRRRRKSASGDDNDAALEGPLPDDPPNTVVHERVPRAGDKAGNSQDGGSGSTEIKGIDGSTRLEAKRQRRRDGRDAGRRRPPVLSEAEFLARREAVERVMVVRDRVRTEPPLPGTRYTQIAVLEDGIVVEHFVTSAASASLVGNIYLGIVQNVLPSMEAAFVDIGRGRNGVLYAGEVNWDAAGLGGADRKIEQALKPGDYVVVQVSKDPVGHKGARLTTQVSLAGRFLVYVPGASSTGISRKLPDTERQRLKEILREVVPSDAGVIIRTASEGVKEDDIRADVARLRERWEQIEAKAQETKEKAAGAAVALYEEPDVLVKVIRDLFNEDFVGLIVSGDEAWNTINEYVNSVAPELVSKLTKYESADGPDGQSAPDVFTVHRIDEQLAKAMDRKVWLPSGGTLVIDRTEAMTVIDVNTGKFTGAGGNLEQTVTKNNLEAAEEIVRQLRLRDIGGIVVIDFIDMVLESNRDLVLRRLTESLARDRTRHQVSEVTSLGLVQLTRKRLGTGLIEAFSTSCPNCSGRGILLHADPVDSAAATGRKSEPGARRGKRSKKSRSEESSDRSMVAKVPVHAPGEHPMFKAMAAGLSSLAGRGDEESGEPAAELAEQAGDQPPTDLDDTAQADFEDTEDTDEDEDELDADEDLEDLDDEDLDEDLDVEDSDSDDEDSDEDAADADVDEEDAAGLDGSPGEVDVPGVTELAPTRPRRRVAGRPAGPPIRLD.

Disordered regions lie at residues 1–23 (MIDG…PDRL) and 118–314 (VAPQ…RRRP). Residues 14–23 (SQHEELPDRL) are compositionally biased toward basic and acidic residues. Over residues 127–150 (LADDEDVDDGPDYVADDSDADDEG) the composition is skewed to acidic residues. The segment covering 157-169 (NRRRRRGRRGRGR) has biased composition (basic residues). Polar residues predominate over residues 183–193 (DQQSEPRAQQF). The span at 199-223 (AETDDGDDRDSEDTEAGDNGEDENG) shows a compositional bias: acidic residues. Positions 230 to 240 (RRRRRRRRRKS) are enriched in basic residues. Composition is skewed to basic and acidic residues over residues 263 to 272 (VHERVPRAGD) and 294 to 311 (TRLE…DAGR). Positions 376 to 453 (GNIYLGIVQN…GHKGARLTTQ (78 aa)) constitute an S1 motif domain. Asp647 and Asp691 together coordinate Mg(2+). Zn(2+) contacts are provided by Cys749 and Cys752. 2 disordered regions span residues 766–808 (SAAA…APGE) and 822–953 (LAGR…IRLD). A compositionally biased stretch (acidic residues) spans 848 to 915 (DLDDTAQADF…DADVDEEDAA (68 aa)).

This sequence belongs to the RNase E/G family. In terms of assembly, assembles into a homotetramer formed by a dimer of dimers. Interacts with DNA-binding protein HU (hupB). It depends on Mg(2+) as a cofactor. The cofactor is Zn(2+).

Its subcellular location is the cytoplasm. The catalysed reaction is Endonucleolytic cleavage of single-stranded RNA in A- and U-rich regions.. Its function is as follows. Endoribonuclease that plays a central role in RNA processing and decay. Plays a major role in pre-16S rRNA maturation, probably generating the mature 5'-end, and a minor role in pre-5S and pre-23S rRNA maturation. Probably also processes tRNA. RNase E and HupB jointly contribute to cellular adaptation to changing growth conditions and survival during antibiotic treatment and in the host. This is Ribonuclease E from Mycobacterium tuberculosis (strain ATCC 25618 / H37Rv).